The following is a 91-amino-acid chain: Small ribosomal subunit protein bS16 (91 aa).

The protein belongs to the bacterial ribosomal protein bS16 family.

The polypeptide is Small ribosomal subunit protein bS16 (Ruthia magnifica subsp. Calyptogena magnifica).